The following is a 201-amino-acid chain: Probable GTP-binding protein EngB (201 aa).

The EngB-type G domain maps to 21-191; it reads AAPQIILAGR…WNLLDVTAIP (171 aa). Residues 29–36, 56–60, 75–78, 142–145, and 168–172 contribute to the GTP site; these read GRSNVGKS, GKTRS, DLPG, TKSD, and ICVSS. The Mg(2+) site is built by Ser36 and Thr58.

It belongs to the TRAFAC class TrmE-Era-EngA-EngB-Septin-like GTPase superfamily. EngB GTPase family. Mg(2+) is required as a cofactor.

Functionally, necessary for normal cell division and for the maintenance of normal septation. The polypeptide is Probable GTP-binding protein EngB (Maridesulfovibrio salexigens (strain ATCC 14822 / DSM 2638 / NCIMB 8403 / VKM B-1763) (Desulfovibrio salexigens)).